The sequence spans 148 residues: Large ribosomal subunit protein bL9 (148 aa).

It belongs to the bacterial ribosomal protein bL9 family.

Functionally, binds to the 23S rRNA. The sequence is that of Large ribosomal subunit protein bL9 from Syntrophobacter fumaroxidans (strain DSM 10017 / MPOB).